A 454-amino-acid chain; its full sequence is Keratin, type I cuticular Ha5 (454 aa).

Residues 1 to 97 (MASKCLKASF…FGEGILTGNE (97 aa)) form a head region. One can recognise an IF rod domain in the interval 97-407 (EKETMQFLND…GLLDSEDCKL (311 aa)). The tract at residues 98–125 (KETMQFLNDRLASYLEKCGSWSGRTRSW) is coil 1A. Positions 134-142 (SNSALPVPD) are linker 1. The coil 1B stretch occupies residues 143 to 243 (YQSYFQTIEE…HEEEVNSLRC (101 aa)). The tract at residues 244–259 (QLGDRLNVEVDAAPPV) is linker 12. The tract at residues 260–403 (DLNRVLNEMR…NTYRGLLDSE (144 aa)) is coil 2. Positions 404 to 454 (DCKLPCNPCAPDHSPSKSCLPCLPAASCGPGMARTTCSPRPICVPCPGSRF) are tail.

Belongs to the intermediate filament family.

The chain is Keratin, type I cuticular Ha5 from Bos taurus (Bovine).